Consider the following 166-residue polypeptide: Phosphopantetheine adenylyltransferase (166 aa).

Ser-11 is a substrate binding site. ATP is bound by residues 11–12 (SF) and His-19. Lys-43, Leu-75, and Arg-89 together coordinate substrate. Residues 90-92 (GLR), Glu-100, and 125-131 (YGYLSSS) contribute to the ATP site.

It belongs to the bacterial CoaD family. In terms of assembly, homohexamer. Requires Mg(2+) as cofactor.

Its subcellular location is the cytoplasm. The catalysed reaction is (R)-4'-phosphopantetheine + ATP + H(+) = 3'-dephospho-CoA + diphosphate. The protein operates within cofactor biosynthesis; coenzyme A biosynthesis; CoA from (R)-pantothenate: step 4/5. In terms of biological role, reversibly transfers an adenylyl group from ATP to 4'-phosphopantetheine, yielding dephospho-CoA (dPCoA) and pyrophosphate. This chain is Phosphopantetheine adenylyltransferase, found in Syntrophotalea carbinolica (strain DSM 2380 / NBRC 103641 / GraBd1) (Pelobacter carbinolicus).